The following is a 351-amino-acid chain: Photosystem II D2 protein (351 aa).

The chain crosses the membrane as a helical span at residues 39-59; sequence TAYLAVGGWFTGTTFVTSWYT. His-116 contributes to the chlorophyll a binding site. The chain crosses the membrane as a helical span at residues 123-139; that stretch reads GFCLRQFEIARLVGIRP. Positions 128 and 141 each coordinate pheophytin a. The helical transmembrane segment at 151–164 threads the bilayer; that stretch reads IFVSVFLLYPLGQA. Position 196 (His-196) interacts with chlorophyll a. A helical transmembrane segment spans residues 206 to 226; sequence GALLCAIHGATVENTLFEDGD. Residues His-213 and Phe-260 each contribute to the a plastoquinone site. His-213 contributes to the Fe cation binding site. His-267 serves as a coordination point for Fe cation. The helical transmembrane segment at 277-293 threads the bilayer; that stretch reads GLWTSAIGIVGLALNLR.

This sequence belongs to the reaction center PufL/M/PsbA/D family. As to quaternary structure, PSII is composed of 1 copy each of membrane proteins PsbA, PsbB, PsbC, PsbD, PsbE, PsbF, PsbH, PsbI, PsbJ, PsbK, PsbL, PsbM, PsbT, PsbX, PsbY, PsbZ, Psb30/Ycf12, at least 3 peripheral proteins of the oxygen-evolving complex and a large number of cofactors. It forms dimeric complexes. Requires The D1/D2 heterodimer binds P680, chlorophylls that are the primary electron donor of PSII, and subsequent electron acceptors. It shares a non-heme iron and each subunit binds pheophytin, quinone, additional chlorophylls, carotenoids and lipids. There is also a Cl(-1) ion associated with D1 and D2, which is required for oxygen evolution. The PSII complex binds additional chlorophylls, carotenoids and specific lipids. as cofactor.

It localises to the plastid. The protein resides in the chloroplast thylakoid membrane. It carries out the reaction 2 a plastoquinone + 4 hnu + 2 H2O = 2 a plastoquinol + O2. Its function is as follows. Photosystem II (PSII) is a light-driven water:plastoquinone oxidoreductase that uses light energy to abstract electrons from H(2)O, generating O(2) and a proton gradient subsequently used for ATP formation. It consists of a core antenna complex that captures photons, and an electron transfer chain that converts photonic excitation into a charge separation. The D1/D2 (PsbA/PsbD) reaction center heterodimer binds P680, the primary electron donor of PSII as well as several subsequent electron acceptors. D2 is needed for assembly of a stable PSII complex. The polypeptide is Photosystem II D2 protein (Heterosigma akashiwo (strain NIES-293 / 8280G21-1)).